We begin with the raw amino-acid sequence, 234 residues long: Ribonuclease HII (234 aa).

The 192-residue stretch at 30–221 (GPVAGVDEAG…VRNAAMGSSL (192 aa)) folds into the RNase H type-2 domain. A divalent metal cation is bound by residues aspartate 36, glutamate 37, and aspartate 130.

It belongs to the RNase HII family. The cofactor is Mn(2+). It depends on Mg(2+) as a cofactor.

It is found in the cytoplasm. The catalysed reaction is Endonucleolytic cleavage to 5'-phosphomonoester.. Functionally, endonuclease that specifically degrades the RNA of RNA-DNA hybrids. The chain is Ribonuclease HII from Mycobacteroides abscessus (strain ATCC 19977 / DSM 44196 / CCUG 20993 / CIP 104536 / JCM 13569 / NCTC 13031 / TMC 1543 / L948) (Mycobacterium abscessus).